We begin with the raw amino-acid sequence, 363 residues long: Alanine racemase (363 aa).

The active-site Proton acceptor; specific for D-alanine is Lys-35. Residue Lys-35 is modified to N6-(pyridoxal phosphate)lysine. A substrate-binding site is contributed by Arg-134. The Proton acceptor; specific for L-alanine role is filled by Tyr-259. Met-307 lines the substrate pocket.

The protein belongs to the alanine racemase family. It depends on pyridoxal 5'-phosphate as a cofactor.

The enzyme catalyses L-alanine = D-alanine. It participates in amino-acid biosynthesis; D-alanine biosynthesis; D-alanine from L-alanine: step 1/1. In terms of biological role, catalyzes the interconversion of L-alanine and D-alanine. May also act on other amino acids. The sequence is that of Alanine racemase (alr) from Shewanella denitrificans (strain OS217 / ATCC BAA-1090 / DSM 15013).